The sequence spans 322 residues: Ferrochelatase (322 aa).

The Fe cation site is built by His194 and Glu275.

It belongs to the ferrochelatase family.

It localises to the cytoplasm. It carries out the reaction heme b + 2 H(+) = protoporphyrin IX + Fe(2+). Its pathway is porphyrin-containing compound metabolism; protoheme biosynthesis; protoheme from protoporphyrin-IX: step 1/1. Catalyzes the ferrous insertion into protoporphyrin IX. This is Ferrochelatase from Yersinia enterocolitica serotype O:8 / biotype 1B (strain NCTC 13174 / 8081).